A 91-amino-acid chain; its full sequence is UPF0250 protein PputW619_0619 (91 aa).

This sequence belongs to the UPF0250 family.

This is UPF0250 protein PputW619_0619 from Pseudomonas putida (strain W619).